Reading from the N-terminus, the 354-residue chain is Probable L-ascorbate-6-phosphate lactonase UlaG (354 aa).

It belongs to the UlaG family. A divalent metal cation serves as cofactor.

The protein localises to the cytoplasm. The enzyme catalyses L-ascorbate 6-phosphate + H2O = 3-dehydro-L-gulonate 6-phosphate. The protein operates within cofactor degradation; L-ascorbate degradation; D-xylulose 5-phosphate from L-ascorbate: step 1/4. In terms of biological role, probably catalyzes the hydrolysis of L-ascorbate-6-P into 3-keto-L-gulonate-6-P. Is essential for L-ascorbate utilization under anaerobic conditions. This is Probable L-ascorbate-6-phosphate lactonase UlaG from Escherichia coli (strain SMS-3-5 / SECEC).